The sequence spans 265 residues: Translation initiation factor 2 subunit alpha (265 aa).

One can recognise an S1 motif domain in the interval 12–82; the sequence is GELVIGTVKK…KMRVVEVSLK (71 aa).

It belongs to the eIF-2-alpha family. In terms of assembly, heterotrimer composed of an alpha, a beta and a gamma chain.

EIF-2 functions in the early steps of protein synthesis by forming a ternary complex with GTP and initiator tRNA. This is Translation initiation factor 2 subunit alpha from Pyrobaculum aerophilum (strain ATCC 51768 / DSM 7523 / JCM 9630 / CIP 104966 / NBRC 100827 / IM2).